A 457-amino-acid chain; its full sequence is Siroheme synthase (457 aa).

The precorrin-2 dehydrogenase /sirohydrochlorin ferrochelatase stretch occupies residues 1–204 (MDHLPIFCQL…NDQKAITETT (204 aa)). Residues 22-23 (DV) and 43-44 (LA) contribute to the NAD(+) site. Position 128 is a phosphoserine (Ser128). The tract at residues 216-457 (GEVVLVGAGP…RDKLNWFSNH (242 aa)) is uroporphyrinogen-III C-methyltransferase. Position 225 (Pro225) interacts with S-adenosyl-L-methionine. Catalysis depends on Asp248, which acts as the Proton acceptor. The active-site Proton donor is the Lys270. S-adenosyl-L-methionine-binding positions include 301 to 303 (GGD), Ile306, 331 to 332 (TA), Met382, and Gly411.

It in the N-terminal section; belongs to the precorrin-2 dehydrogenase / sirohydrochlorin ferrochelatase family. In the C-terminal section; belongs to the precorrin methyltransferase family.

The enzyme catalyses uroporphyrinogen III + 2 S-adenosyl-L-methionine = precorrin-2 + 2 S-adenosyl-L-homocysteine + H(+). It catalyses the reaction precorrin-2 + NAD(+) = sirohydrochlorin + NADH + 2 H(+). It carries out the reaction siroheme + 2 H(+) = sirohydrochlorin + Fe(2+). Its pathway is cofactor biosynthesis; adenosylcobalamin biosynthesis; precorrin-2 from uroporphyrinogen III: step 1/1. It functions in the pathway cofactor biosynthesis; adenosylcobalamin biosynthesis; sirohydrochlorin from precorrin-2: step 1/1. The protein operates within porphyrin-containing compound metabolism; siroheme biosynthesis; precorrin-2 from uroporphyrinogen III: step 1/1. It participates in porphyrin-containing compound metabolism; siroheme biosynthesis; siroheme from sirohydrochlorin: step 1/1. Its pathway is porphyrin-containing compound metabolism; siroheme biosynthesis; sirohydrochlorin from precorrin-2: step 1/1. Functionally, multifunctional enzyme that catalyzes the SAM-dependent methylations of uroporphyrinogen III at position C-2 and C-7 to form precorrin-2 via precorrin-1. Then it catalyzes the NAD-dependent ring dehydrogenation of precorrin-2 to yield sirohydrochlorin. Finally, it catalyzes the ferrochelation of sirohydrochlorin to yield siroheme. The sequence is that of Siroheme synthase from Escherichia coli O7:K1 (strain IAI39 / ExPEC).